The primary structure comprises 375 residues: All-trans-retinol dehydrogenase [NAD(+)] ADH1B (375 aa).

The residue at position 2 (serine 2) is an N-acetylserine. The residue at position 23 (serine 23) is a Phosphoserine. Tyrosine 35 carries the post-translational modification Phosphotyrosine. Residues cysteine 47, histidine 68, cysteine 98, cysteine 101, cysteine 104, cysteine 112, and cysteine 175 each coordinate Zn(2+). NAD(+) contacts are provided by residues 200–205, aspartate 224, lysine 229, 293–295, and arginine 370; these read GLGGVG and VGV.

The protein belongs to the zinc-containing alcohol dehydrogenase family. As to quaternary structure, homodimer or heterodimer of closely related subunits. Zn(2+) is required as a cofactor. In terms of tissue distribution, expressed in liver.

The protein localises to the cytoplasm. The enzyme catalyses all-trans-retinol + NAD(+) = all-trans-retinal + NADH + H(+). It carries out the reaction all-trans-4-hydroxyretinol + NAD(+) = all-trans-4-hydroxyretinal + NADH + H(+). It catalyses the reaction all-trans-4-oxoretinol + NAD(+) = all-trans-4-oxoretinal + NADH + H(+). Its function is as follows. Catalyzes the NAD-dependent oxidation of all-trans-retinol and its derivatives such as all-trans-4-hydroxyretinol and may participate in retinoid metabolism. In vitro can also catalyze the NADH-dependent reduction of all-trans-retinal and its derivatives such as all-trans-4-oxoretinal. Catalyzes in the oxidative direction with higher efficiency. Has the same affinity for all-trans-4-hydroxyretinol and all-trans-4-oxoretinal. The polypeptide is All-trans-retinol dehydrogenase [NAD(+)] ADH1B (Papio hamadryas (Hamadryas baboon)).